Consider the following 193-residue polypeptide: Ion-translocating oxidoreductase complex subunit A (193 aa).

A run of 6 helical transmembrane segments spans residues 5-25 (LLLFVGTVLVNNFVLVKFLGL), 39-59 (IGMGLATTFVLTLASVCAWMV), 62-82 (FILLPLGLIYLRTLAFILVIA), 102-122 (LLGIFLPLITTNCAVLGVALL), 134-154 (AVYGFSAAAGFSLVMVLFAAI), and 171-191 (SIALITAGLMSLAFMGFTGLV).

Belongs to the NqrDE/RnfAE family. In terms of assembly, the complex is composed of six subunits: RnfA, RnfB, RnfC, RnfD, RnfE and RnfG.

It localises to the cell inner membrane. In terms of biological role, part of a membrane-bound complex that couples electron transfer with translocation of ions across the membrane. This chain is Ion-translocating oxidoreductase complex subunit A, found in Yersinia pestis bv. Antiqua (strain Nepal516).